Here is a 175-residue protein sequence, read N- to C-terminus: Large ribosomal subunit protein uL10 (175 aa).

Belongs to the universal ribosomal protein uL10 family. In terms of assembly, part of the ribosomal stalk of the 50S ribosomal subunit. The N-terminus interacts with L11 and the large rRNA to form the base of the stalk. The C-terminus forms an elongated spine to which L12 dimers bind in a sequential fashion forming a multimeric L10(L12)X complex.

Functionally, forms part of the ribosomal stalk, playing a central role in the interaction of the ribosome with GTP-bound translation factors. The sequence is that of Large ribosomal subunit protein uL10 from Mycobacterium sp. (strain KMS).